We begin with the raw amino-acid sequence, 199 residues long: Protein-methionine-sulfoxide reductase heme-binding subunit MsrQ (199 aa).

5 helical membrane passes run 13–33 (VLLH…VDQG), 79–99 (LLGL…ALLE), 120–140 (LGVI…QIMM), 147–167 (WQKL…HYLW), and 169–189 (VKTL…LLLF).

This sequence belongs to the MsrQ family. As to quaternary structure, heterodimer of a catalytic subunit (MsrP) and a heme-binding subunit (MsrQ). FMN serves as cofactor. It depends on heme b as a cofactor.

The protein localises to the cell inner membrane. Functionally, part of the MsrPQ system that repairs oxidized periplasmic proteins containing methionine sulfoxide residues (Met-O), using respiratory chain electrons. Thus protects these proteins from oxidative-stress damage caused by reactive species of oxygen and chlorine generated by the host defense mechanisms. MsrPQ is essential for the maintenance of envelope integrity under bleach stress, rescuing a wide series of structurally unrelated periplasmic proteins from methionine oxidation. MsrQ provides electrons for reduction to the reductase catalytic subunit MsrP, using the quinone pool of the respiratory chain. The chain is Protein-methionine-sulfoxide reductase heme-binding subunit MsrQ from Pectobacterium carotovorum subsp. carotovorum (strain PC1).